A 388-amino-acid polypeptide reads, in one-letter code: Dual-specificity RNA methyltransferase RlmN (388 aa).

Glu-109 serves as the catalytic Proton acceptor. Residues 115–354 (EDDRATLCVS…TIVRKTRGDD (240 aa)) enclose the Radical SAM core domain. Cys-122 and Cys-359 are joined by a disulfide. Residues Cys-129, Cys-133, and Cys-136 each coordinate [4Fe-4S] cluster. Residues 183-184 (GE), Ser-215, 237-239 (SLH), and Asn-316 each bind S-adenosyl-L-methionine. The active-site S-methylcysteine intermediate is Cys-359.

The protein belongs to the radical SAM superfamily. RlmN family. [4Fe-4S] cluster is required as a cofactor.

The protein resides in the cytoplasm. It carries out the reaction adenosine(2503) in 23S rRNA + 2 reduced [2Fe-2S]-[ferredoxin] + 2 S-adenosyl-L-methionine = 2-methyladenosine(2503) in 23S rRNA + 5'-deoxyadenosine + L-methionine + 2 oxidized [2Fe-2S]-[ferredoxin] + S-adenosyl-L-homocysteine. The enzyme catalyses adenosine(37) in tRNA + 2 reduced [2Fe-2S]-[ferredoxin] + 2 S-adenosyl-L-methionine = 2-methyladenosine(37) in tRNA + 5'-deoxyadenosine + L-methionine + 2 oxidized [2Fe-2S]-[ferredoxin] + S-adenosyl-L-homocysteine. Specifically methylates position 2 of adenine 2503 in 23S rRNA and position 2 of adenine 37 in tRNAs. m2A2503 modification seems to play a crucial role in the proofreading step occurring at the peptidyl transferase center and thus would serve to optimize ribosomal fidelity. The sequence is that of Dual-specificity RNA methyltransferase RlmN from Salmonella typhimurium (strain LT2 / SGSC1412 / ATCC 700720).